The sequence spans 80 residues: MATKKPENMSFEAAIEELDGLVDQLENGDLALDDALKKFERGISLARAGQSKLNDAEQRVSILLKNDENAELSDFNPQPE.

It belongs to the XseB family. In terms of assembly, heterooligomer composed of large and small subunits.

Its subcellular location is the cytoplasm. The enzyme catalyses Exonucleolytic cleavage in either 5'- to 3'- or 3'- to 5'-direction to yield nucleoside 5'-phosphates.. Functionally, bidirectionally degrades single-stranded DNA into large acid-insoluble oligonucleotides, which are then degraded further into small acid-soluble oligonucleotides. This is Exodeoxyribonuclease 7 small subunit from Vibrio atlanticus (strain LGP32) (Vibrio splendidus (strain Mel32)).